The following is a 62-amino-acid chain: Small, acid-soluble spore protein H 1 (62 aa).

This sequence belongs to the SspH family.

Its subcellular location is the spore core. The protein is Small, acid-soluble spore protein H 1 of Clostridium botulinum (strain ATCC 19397 / Type A).